The chain runs to 803 residues: 3',5'-cyclic-AMP phosphodiesterase 4D (803 aa).

Residues 1 to 103 form a disordered region; it reads MEAEGSSVPA…SGASRVRHRG (103 aa). Phosphoserine is present on residues His-52 and His-56. Positions 58–85 are enriched in pro residues; sequence PPPPPPSPQPQLQPPPPPPLPPPPPPPG. Ser-137, Ser-294, Ser-296, Ser-343, and Ser-370 each carry phosphoserine. Residues 338-358 are disordered; it reads EVEIPSPTQKEKEKKKRPMSQ. One can recognise a PDEase domain in the interval 381–710; sequence VKTEQEDVLA…EWYQSTIPQS (330 aa). Lys-382 participates in a covalent cross-link: Glycyl lysine isopeptide (Lys-Gly) (interchain with G-Cter in SUMO). The active-site Proton donor is the His-457. Residue His-457 coordinates 3',5'-cyclic AMP. Position 457 (His-457) interacts with AMP. Zn(2+)-binding residues include His-461, His-497, Asp-498, and Asp-615. AMP is bound by residues Asp-498, Asp-615, Asn-618, Gln-666, and Phe-669. Asp-498 contributes to the Mg(2+) binding site. Asp-498 contacts Mn(2+). Gln-666 and Phe-669 together coordinate 3',5'-cyclic AMP. Disordered stretches follow at residues 705–724 and 732–803; these read STIP…GRQG and ELTL…CPDT. Over residues 757–768 the composition is skewed to polar residues; it reads CSDSKTLCTQDS. Residues 774-789 are compositionally biased toward acidic residues; sequence PLDEQVEEEAVAEEES.

Belongs to the cyclic nucleotide phosphodiesterase family. PDE4 subfamily. In terms of assembly, homodimer for the long isoforms. Isoforms with truncated N-termini are monomeric. Binds ARRB2. Isoform 33 is part of a ternary complex containing PRKAR2A, PRKAR2B and AKAP9. Identified in a complex composed of RYR1, PDE4D, PKA, FKBP1A and protein phosphatase 1 (PP1). Interacts with PDE4DIP. Isoform 5 interacts (via N-terminal region) with SHANK2 (via proline-rich region); the interaction is increased in a PKA-dependent manner. Isoform 33, isoform 4, isoform 7, isoform 8 and isoform 9 but not isoform 32 and isoform 6 interact with SHANK2. Isoform 31 interacts weakly with SHANK2. The cofactor is Zn(2+). It depends on Mg(2+) as a cofactor. Mn(2+) serves as cofactor. In terms of processing, isoform 1 and isoform 9 are rapidly activated by PKA through phosphorylation. Long isoforms that share a conserved PKA phosphorylation site in the N-terminus are also activated. Sumoylation of long isoforms by PIAS4 augments their activation by PKA phosphorylation and represses their inhibition by ERK phosphorylation. In terms of tissue distribution, expressed in epithelial cells. Isoform 33, isoform 4, isoform 5 and isoform 9 are expressed in brain. Isoform 33, isoform 5, isoform 8 and isoform 9 are expressed in heart (at protein level). Isoform 4 and isoform 6 are strongly expressed in cortex and cerebellum. Isoform 7 is strongly expressed in cortex and testis; weakly expressed in kidney, lung, spleen and cerebellum. Isoform 8 is strongly expressed in lung, heart and liver. Isoform 31, isoform 32, isoform 33, isoform 5 and isoform 9 are widely distributed.

The protein resides in the apical cell membrane. It is found in the cytoplasm. Its subcellular location is the membrane. The protein localises to the cytoskeleton. It localises to the microtubule organizing center. The protein resides in the centrosome. The enzyme catalyses 3',5'-cyclic AMP + H2O = AMP + H(+). It participates in purine metabolism; 3',5'-cyclic AMP degradation; AMP from 3',5'-cyclic AMP: step 1/1. Its activity is regulated as follows. Activated by phosphatidic acid. Inhibited by rolipram. Functionally, hydrolyzes the second messenger cAMP, which is a key regulator of many important physiological processes. The chain is 3',5'-cyclic-AMP phosphodiesterase 4D (Pde4d) from Rattus norvegicus (Rat).